We begin with the raw amino-acid sequence, 197 residues long: Dephospho-CoA kinase (197 aa).

The DPCK domain maps to Ile2–Ala197. Ala10 to Leu15 is an ATP binding site.

The protein belongs to the CoaE family.

The protein resides in the cytoplasm. It catalyses the reaction 3'-dephospho-CoA + ATP = ADP + CoA + H(+). Its pathway is cofactor biosynthesis; coenzyme A biosynthesis; CoA from (R)-pantothenate: step 5/5. Functionally, catalyzes the phosphorylation of the 3'-hydroxyl group of dephosphocoenzyme A to form coenzyme A. This Dichelobacter nodosus (Bacteroides nodosus) protein is Dephospho-CoA kinase.